The sequence spans 297 residues: HTH-type transcriptional regulator AceR (297 aa).

An HTH lysR-type domain is found at 1–60 (MNINQEQLLMFQAVMETGSFSAAARKLGKVPSAVSMSIANLEIDLNLTLFERKGREPTPT). A DNA-binding region (H-T-H motif) is located at residues 20-39 (FSAAARKLGKVPSAVSMSIA).

Belongs to the LysR transcriptional regulatory family. In terms of assembly, homodimer and homotetramer. Binding of chlorhexidine at the inducer-binding domain causes a quaternary structural change that favors interactions between dimers to form tetramers.

The protein resides in the cytoplasm. In terms of biological role, regulates the expression of the AceI transporter. Binds DNA and chlorhexidine. Binds to regulatory sites within the intergenic region between the aceI and aceR genes, and affects the interaction between RNA polymerase (RNAP) and promoter DNA both in the presence and in the absence of chlorhexidine. In the absence of chlorhexidine, prevents transcription of the aceI gene by disrupting interactions between the promoter DNA and RNAP. In the presence of chlorhexidine, activates expression of aceI. When AceR interacts with chlorhexidine, it undergoes a conformational change and the tetrameric form either releases the DNA or shifts the position of the DNA-binding region to allow RNAP to bind onto the promoter DNA to proceed with aceI transcription. The chain is HTH-type transcriptional regulator AceR from Acinetobacter baumannii (strain ATCC 17978 / DSM 105126 / CIP 53.77 / LMG 1025 / NCDC KC755 / 5377).